Consider the following 148-residue polypeptide: Calmodulin (148 aa).

N-acetylalanine is present on alanine 2. EF-hand domains are found at residues 8 to 43 (DQIS…LGQN), 44 to 79 (PTEA…KMKD), 81 to 116 (DSEE…LGEK), and 116 to 148 (KLTD…MMAK). 14 residues coordinate Ca(2+): aspartate 21, aspartate 23, aspartate 25, cysteine 27, glutamate 32, aspartate 57, aspartate 59, asparagine 61, threonine 63, glutamate 68, aspartate 94, aspartate 96, asparagine 98, and glutamate 105. Lysine 116 carries the post-translational modification N6,N6,N6-trimethyllysine. Residues aspartate 129, aspartate 131, aspartate 133, glutamine 135, and glutamate 140 each coordinate Ca(2+).

This sequence belongs to the calmodulin family.

Functionally, calmodulin mediates the control of a large number of enzymes, ion channels and other proteins by Ca(2+). Among the enzymes to be stimulated by the calmodulin-Ca(2+) complex are a number of protein kinases and phosphatases. The sequence is that of Calmodulin (CAMF1) from Fagus sylvatica (Beechnut).